Consider the following 193-residue polypeptide: TDSPIPAPAPAAKPKRARAPRKPASHPTYSEMIAAAIRADKSRGGSSRQSIQKYVKSHYKVGQHADLQIKLAIRRLLTTGVLKQTKGVGASGSFRLAKGDKAKRSPAGRKKKKKAARKSTSPKKAARPRKARSPAKKPKAAARKARKKSRASPKKAKKPKTVKAKSLKTSKPKKARRSKPRAKSGARKSPKKK.

Residues 1–11 are compositionally biased toward pro residues; sequence TDSPIPAPAPA. 2 disordered regions span residues 1 to 29 and 80 to 193; these read TDSP…HPTY and GVLK…PKKK. The segment covering 13-24 has biased composition (basic residues); the sequence is KPKRARAPRKPA. The H15 domain maps to 25–98; it reads SHPTYSEMIA…GASGSFRLAK (74 aa). Residues 104-193 are compositionally biased toward basic residues; sequence RSPAGRKKKK…SGARKSPKKK (90 aa).

The protein belongs to the histone H1/H5 family. Erythroid cells.

It localises to the nucleus. It is found in the chromosome. Histone H5 performs the same function as H1, being necessary for the condensation of nucleosome chains into higher order structures, and replaces histone H1 in certain cells. The chain is Histone H5 from Anser anser anser (Western greylag goose).